The sequence spans 193 residues: MELNPVDSILSDRIQAIVATEKNIDDMMKCAREIMQDLGKEKQISKNKMDDNANSFKKLITQVENELSAQMQYLSHVCVGSSHQGSTFGVLQNSLLAQSGLSSLHSELAQILKNIEPPTQEVDEDNEDEEDSGDADMLEETPEDVVAPRTTSSSATTSDGGSGGADDAASSSAPRSQEERRSTEEEEGEQMEN.

Residues 31–68 (AREIMQDLGKEKQISKNKMDDNANSFKKLITQVENELS) adopt a coiled-coil conformation. The tract at residues 115–193 (IEPPTQEVDE…EEEEGEQMEN (79 aa)) is disordered. Residues 121 to 143 (EVDEDNEDEEDSGDADMLEETPE) show a composition bias toward acidic residues. Residues 150 to 175 (TTSSSATTSDGGSGGADDAASSSAPR) show a composition bias toward low complexity. The segment covering 184-193 (EEEEGEQMEN) has biased composition (acidic residues).

This sequence belongs to the Mediator complex subunit 11 family. In terms of assembly, component of the Mediator complex.

It is found in the nucleus. Functionally, component of the Mediator complex, a coactivator involved in the regulated transcription of nearly all RNA polymerase II-dependent genes. Mediator functions as a bridge to convey information from gene-specific regulatory proteins to the basal RNA polymerase II transcription machinery. Mediator is recruited to promoters by direct interactions with regulatory proteins and serves as a scaffold for the assembly of a functional pre-initiation complex with RNA polymerase II and the general transcription factors. The sequence is that of Mediator of RNA polymerase II transcription subunit 11 (mdt-11) from Caenorhabditis briggsae.